The chain runs to 176 residues: RNA polymerase sigma factor SigZ (176 aa).

Residues 30 to 43 carry the Polymerase core binding motif; it reads DLLQIVFMKIQVHL. The H-T-H motif DNA-binding region spans 125-144; that stretch reads QKELSEKLGISYSGAKSRVQ.

Belongs to the sigma-70 factor family. ECF subfamily.

Functionally, sigma factors are initiation factors that promote the attachment of RNA polymerase to specific initiation sites and are then released. This chain is RNA polymerase sigma factor SigZ (sigZ), found in Bacillus subtilis (strain 168).